The chain runs to 303 residues: Acetylglutamate kinase (303 aa).

Substrate is bound by residues 73-74 (GG), arginine 95, and asparagine 194.

Belongs to the acetylglutamate kinase family. ArgB subfamily.

The protein localises to the cytoplasm. The enzyme catalyses N-acetyl-L-glutamate + ATP = N-acetyl-L-glutamyl 5-phosphate + ADP. It participates in amino-acid biosynthesis; L-arginine biosynthesis; N(2)-acetyl-L-ornithine from L-glutamate: step 2/4. Its function is as follows. Catalyzes the ATP-dependent phosphorylation of N-acetyl-L-glutamate. This is Acetylglutamate kinase from Saccharopolyspora erythraea (strain ATCC 11635 / DSM 40517 / JCM 4748 / NBRC 13426 / NCIMB 8594 / NRRL 2338).